The chain runs to 222 residues: Gamma-glutamyl cyclotransferase gliK (222 aa).

The next 2 helical transmembrane spans lie at G154–I174 and G187–Q207.

This sequence belongs to the class-I pyridoxal-phosphate-dependent aminotransferase family.

The protein localises to the membrane. The catalysed reaction is an alpha-(gamma-L-glutamyl)-L-amino acid = 5-oxo-L-proline + an L-alpha-amino acid. The protein operates within secondary metabolite biosynthesis. Its function is as follows. Gamma-glutamyl cyclotransferase; part of the gene cluster that mediates the biosynthesis of an unusual class of epipolythiodioxopiperazines (ETPs) lacking the reactive thiol group important for toxicity. Firstly, L-tyrosine is prenylated by tcpD, before undergoing condensation with L-glycine in a reaction catalyzed by the NRPS tcpP leading to the diketopiperazine (DKP) backbone. Afterwards the alpha-carbon of tyrosine is oxidized by the cytochrome P450 tcpC to form a hydroxyl group. However, in contrast other ETP biosynthesis pathways studied so far, tcpC is not able to bishydroxylate the DKP at both alpha-carbon positions, but hydroxylates the alpha-carbon of the tyrosine part and the nitrogen of the glycine part. The next steps involve an alpha,beta-elimination reaction catalyzed by tcpI, a methylation by the methyltransferase tcpN the action of the four enzyme cascade tcpG/K/J/I. Due to a dysfunctional cytochrome P450 monooxygenase tcpC, the pathway leads to the biosynthesis of probable non-toxic metabolites lacking the reactive thiol group. The sequence is that of Gamma-glutamyl cyclotransferase gliK from Claviceps purpurea (strain 20.1) (Ergot fungus).